A 344-amino-acid chain; its full sequence is Ribosomal RNA large subunit methyltransferase Cfr (344 aa).

The active-site Proton acceptor is Glu-88. Residues 95–324 enclose the Radical SAM core domain; it reads KKGWESFCIS…HANGISVATR (230 aa). Cys-102 and Cys-335 are disulfide-bonded. The [4Fe-4S] cluster site is built by Cys-109, Cys-113, and Cys-116. S-adenosyl-L-methionine-binding positions include 155 to 156, Ser-186, 209 to 211, and Asn-290; these read GE and SLH. Catalysis depends on Cys-335, which acts as the S-methylcysteine intermediate.

This sequence belongs to the radical SAM superfamily. RlmN family. Cfr subfamily. [4Fe-4S] cluster is required as a cofactor.

Its subcellular location is the cytoplasm. The enzyme catalyses adenosine(2503) in 23S rRNA + 2 reduced [2Fe-2S]-[ferredoxin] + 2 S-adenosyl-L-methionine = 8-methyladenosine(2503) in 23S rRNA + 5'-deoxyadenosine + L-methionine + 2 oxidized [2Fe-2S]-[ferredoxin] + S-adenosyl-L-homocysteine. Functionally, specifically methylates position 8 of adenine 2503 in 23S rRNA. Confers resistance to some classes of antibiotics. This Lachnoclostridium phytofermentans (strain ATCC 700394 / DSM 18823 / ISDg) (Clostridium phytofermentans) protein is Ribosomal RNA large subunit methyltransferase Cfr.